The sequence spans 111 residues: Integration host factor subunit alpha (111 aa).

It belongs to the bacterial histone-like protein family. In terms of assembly, heterodimer of an alpha and a beta chain.

Its function is as follows. This protein is one of the two subunits of integration host factor, a specific DNA-binding protein that functions in genetic recombination as well as in transcriptional and translational control. The sequence is that of Integration host factor subunit alpha from Polaromonas sp. (strain JS666 / ATCC BAA-500).